The chain runs to 101 residues: Co-chaperonin GroES (101 aa).

The protein belongs to the GroES chaperonin family. Heptamer of 7 subunits arranged in a ring. Interacts with the chaperonin GroEL.

The protein localises to the cytoplasm. In terms of biological role, together with the chaperonin GroEL, plays an essential role in assisting protein folding. The GroEL-GroES system forms a nano-cage that allows encapsulation of the non-native substrate proteins and provides a physical environment optimized to promote and accelerate protein folding. GroES binds to the apical surface of the GroEL ring, thereby capping the opening of the GroEL channel. The sequence is that of Co-chaperonin GroES from Lawsonia intracellularis.